The chain runs to 135 residues: Mediator of RNA polymerase II transcription subunit 10 (135 aa).

It belongs to the Mediator complex subunit 10 family. Component of the Mediator complex.

The protein resides in the nucleus. In terms of biological role, component of the Mediator complex, a coactivator involved in the regulated transcription of nearly all RNA polymerase II-dependent genes. Mediator functions as a bridge to convey information from gene-specific regulatory proteins to the basal RNA polymerase II transcription machinery. Mediator is recruited to promoters by direct interactions with regulatory proteins and serves as a scaffold for the assembly of a functional preinitiation complex with RNA polymerase II and the general transcription factors. The chain is Mediator of RNA polymerase II transcription subunit 10 (med10) from Xenopus laevis (African clawed frog).